Here is a 415-residue protein sequence, read N- to C-terminus: Peptide chain release factor subunit 1 (415 aa).

It belongs to the eukaryotic release factor 1 family. In terms of assembly, heterodimer of two subunits, one of which binds GTP.

It is found in the cytoplasm. In terms of biological role, directs the termination of nascent peptide synthesis (translation) in response to the termination codons UAA, UAG and UGA. This chain is Peptide chain release factor subunit 1, found in Thermococcus kodakarensis (strain ATCC BAA-918 / JCM 12380 / KOD1) (Pyrococcus kodakaraensis (strain KOD1)).